The primary structure comprises 806 residues: SH3-containing GRB2-like protein 3-interacting protein 1 (806 aa).

2 disordered regions span residues 1-115 and 142-278; these read MMEG…ESHK and SIGN…QAAT. Composition is skewed to basic and acidic residues over residues 16–32 and 40–54; these read RKKEKDTDSTGSPDRDG and PPYHSKAECAREGGK. Residues S78, S104, S105, S107, S149, S151, S156, and S169 each carry the phosphoserine modification. T180 and T182 each carry phosphothreonine. 2 positions are modified to phosphoserine: S236 and F243. Residues 245 to 260 are compositionally biased toward pro residues; it reads TGTPPPLPPKTVPATP. 2 positions are modified to phosphothreonine: T247 and T259. Phosphoserine occurs at positions 265, 274, 287, 289, 300, 316, and 319. The span at 265–276 shows a compositional bias: polar residues; it reads SPLTVATGNDQA. The span at 315-324 shows a compositional bias: basic and acidic residues; it reads FSDASPEHVT. The disordered stretch occupies residues 315–533; sequence FSDASPEHVT…SRGPSPLTMG (219 aa). T324, T328, and T335 each carry phosphothreonine. Residues 335–345 show a composition bias toward low complexity; that stretch reads TPPAASDIPAD. A Phosphoserine modification is found at A338. Residues 346-369 show a composition bias toward pro residues; that stretch reads SPAPAPPGPTGSAGPPGPPGPRHV. At S371 the chain carries Phosphoserine. Residues 377 to 392 are compositionally biased toward basic and acidic residues; that stretch reads EVQKKVAEQTFIKDDY. The residue at position 398 (S398) is a Phosphoserine. The residue at position 409 (T409) is a Phosphothreonine. Positions 436–453 are enriched in low complexity; the sequence is TSGASSPARPATPLVPCS. Residues 454–473 are compositionally biased toward pro residues; sequence TTPPPPPPRPPSRPKLPPGK. 2 stretches are compositionally biased toward low complexity: residues 480 to 490 and 497 to 520; these read SRPFSPPIHSS and PLARAESTSSISSTNSLSAATTPT. Residues S484, S505, and G533 each carry the phosphoserine modification. One can recognise an MHD domain in the interval 537–805; it reads TLPVAAAFTE…RFAAGKYLAD (269 aa). 4 interaction with DPF motifs-containing proteins regions span residues 539–545, 571–573, 645–648, and 791–796; these read PVAAAFT, SFP, TYYN, and SLIKKR. A necessary and sufficient to mediate interaction with CANX region spans residues 627 to 806; sequence MPNLMTHLKK…FAAGKYLADN (180 aa).

In terms of assembly, interacts with proteins essential or regulating the formation of functional clathrin-coated pits. Interacts with CANX. Interacts with AP2A1. Interacts with EPS15. Interacts with SH3GL3. Interacts with AMPH. Interacts with ITSN1 (via SH3 domains). Interacts with and REPS1. As to expression, detected in brain, spinal cord and cerebellum.

The protein resides in the membrane. It localises to the clathrin-coated pit. Its function is as follows. May function in clathrin-mediated endocytosis. Has both a membrane binding/tubulating activity and the ability to recruit proteins essential to the formation of functional clathrin-coated pits. Has a preference for membranes enriched in phosphatidylserine and phosphoinositides and is required for the endocytosis of the transferrin receptor. May also bind tubulin. May play a role in the regulation of energy homeostasis. The protein is SH3-containing GRB2-like protein 3-interacting protein 1 (Sgip1) of Mus musculus (Mouse).